A 1106-amino-acid polypeptide reads, in one-letter code: Carbamoyl phosphate synthase large chain (1106 aa).

Positions 1–402 (MPRREDIRSV…SFQKALRSLE (402 aa)) are carboxyphosphate synthetic domain. 12 residues coordinate ATP: Arg-129, Arg-169, Gly-175, Gly-176, Glu-208, Val-210, Glu-215, Gly-241, Val-242, His-243, Gln-285, and Glu-299. The 196-residue stretch at 133-328 (KKAMEKIGVR…IAKIAALLSI (196 aa)) folds into the ATP-grasp 1 domain. Mg(2+) contacts are provided by Gln-285, Glu-299, and Asn-301. Residues Gln-285, Glu-299, and Asn-301 each coordinate Mn(2+). An oligomerization domain region spans residues 403–582 (IDRYGFGSDG…YSSYDEEDES (180 aa)). A carbamoyl phosphate synthetic domain region spans residues 583–964 (DVTNAKSVMI…AFLKSQYMAG (382 aa)). In terms of domain architecture, ATP-grasp 2 spans 707-898 (VEVLEKLKLN…IVKYATRIMM (192 aa)). ATP contacts are provided by Arg-743, Ser-782, Leu-784, Glu-789, Gly-814, Ile-815, His-816, Ser-817, Gln-857, and Glu-869. Residues Gln-857, Glu-869, and Asn-871 each contribute to the Mg(2+) site. The Mn(2+) site is built by Gln-857, Glu-869, and Asn-871. Residues 965 to 1106 (DELPSQGTVF…QEIHAMPKIL (142 aa)) enclose the MGS-like domain. Residues 965 to 1106 (DELPSQGTVF…QEIHAMPKIL (142 aa)) form an allosteric domain region.

It belongs to the CarB family. In terms of assembly, composed of two chains; the small (or glutamine) chain promotes the hydrolysis of glutamine to ammonia, which is used by the large (or ammonia) chain to synthesize carbamoyl phosphate. Tetramer of heterodimers (alpha,beta)4. It depends on Mg(2+) as a cofactor. The cofactor is Mn(2+).

It carries out the reaction hydrogencarbonate + L-glutamine + 2 ATP + H2O = carbamoyl phosphate + L-glutamate + 2 ADP + phosphate + 2 H(+). The catalysed reaction is hydrogencarbonate + NH4(+) + 2 ATP = carbamoyl phosphate + 2 ADP + phosphate + 2 H(+). It participates in amino-acid biosynthesis; L-arginine biosynthesis; carbamoyl phosphate from bicarbonate: step 1/1. The protein operates within pyrimidine metabolism; UMP biosynthesis via de novo pathway; (S)-dihydroorotate from bicarbonate: step 1/3. Functionally, large subunit of the glutamine-dependent carbamoyl phosphate synthetase (CPSase). CPSase catalyzes the formation of carbamoyl phosphate from the ammonia moiety of glutamine, carbonate, and phosphate donated by ATP, constituting the first step of 2 biosynthetic pathways, one leading to arginine and/or urea and the other to pyrimidine nucleotides. The large subunit (synthetase) binds the substrates ammonia (free or transferred from glutamine from the small subunit), hydrogencarbonate and ATP and carries out an ATP-coupled ligase reaction, activating hydrogencarbonate by forming carboxy phosphate which reacts with ammonia to form carbamoyl phosphate. This Leptospira interrogans serogroup Icterohaemorrhagiae serovar copenhageni (strain Fiocruz L1-130) protein is Carbamoyl phosphate synthase large chain.